The chain runs to 176 residues: Variant surface antigen A (176 aa).

The signal sequence occupies residues methionine 1–serine 29. Cysteine 30 carries the N-palmitoyl cysteine lipid modification. Cysteine 30 carries the S-diacylglycerol cysteine lipid modification. Positions threonine 33 to serine 176 are disordered. The segment covering asparagine 35–serine 121 has biased composition (low complexity). Residues lysine 123–threonine 135 form repeat 1. Residues lysine 123–serine 176 are 2.5 X 13 AA repeats. A compositionally biased stretch (polar residues) spans asparagine 126–threonine 142. A compositionally biased stretch (low complexity) spans serine 143–serine 153. Repeat 2 spans residues lysine 155–threonine 167. Positions asparagine 158–serine 176 are enriched in polar residues. The stretch at lysine 168–serine 176 is one 3; truncated repeat.

Its subcellular location is the cell membrane. Its function is as follows. Responsible for the antigenic diversity for host adaptation. The protein is Variant surface antigen A (vlpA) of Mesomycoplasma hyorhinis (Mycoplasma hyorhinis).